The following is a 168-amino-acid chain: Photosystem I assembly protein Ycf3 (168 aa).

TPR repeat units follow at residues 35-68 (AFTY…EIDP), 72-105 (SYIL…NPFL), and 120-153 (GEQA…TPGN).

The protein belongs to the Ycf3 family. Interacts with Y3IP1.

It is found in the plastid. It localises to the chloroplast thylakoid membrane. Functionally, essential for the assembly of the photosystem I (PSI) complex. May act as a chaperone-like factor to guide the assembly of the PSI subunits. The chain is Photosystem I assembly protein Ycf3 from Arabidopsis thaliana (Mouse-ear cress).